We begin with the raw amino-acid sequence, 333 residues long: 1D-myo-inositol 2-acetamido-2-deoxy-alpha-D-glucopyranoside deacetylase (333 aa).

His-18, Asp-21, and His-165 together coordinate Zn(2+).

This sequence belongs to the MshB deacetylase family. The cofactor is Zn(2+).

The catalysed reaction is 1D-myo-inositol 2-acetamido-2-deoxy-alpha-D-glucopyranoside + H2O = 1D-myo-inositol 2-amino-2-deoxy-alpha-D-glucopyranoside + acetate. Its function is as follows. Catalyzes the deacetylation of 1D-myo-inositol 2-acetamido-2-deoxy-alpha-D-glucopyranoside (GlcNAc-Ins) in the mycothiol biosynthesis pathway. The polypeptide is 1D-myo-inositol 2-acetamido-2-deoxy-alpha-D-glucopyranoside deacetylase (Corynebacterium jeikeium (strain K411)).